Reading from the N-terminus, the 208-residue chain is Uracil phosphoribosyltransferase (208 aa).

Residues Arg78, Arg103, and 130–138 each bind 5-phospho-alpha-D-ribose 1-diphosphate; that span reads DPMLATGGS. Residues Ile193 and 198 to 200 each bind uracil; that span reads GDA. Asp199 provides a ligand contact to 5-phospho-alpha-D-ribose 1-diphosphate.

Belongs to the UPRTase family. The cofactor is Mg(2+).

The catalysed reaction is UMP + diphosphate = 5-phospho-alpha-D-ribose 1-diphosphate + uracil. Its pathway is pyrimidine metabolism; UMP biosynthesis via salvage pathway; UMP from uracil: step 1/1. Its activity is regulated as follows. Allosterically activated by GTP. Functionally, catalyzes the conversion of uracil and 5-phospho-alpha-D-ribose 1-diphosphate (PRPP) to UMP and diphosphate. This Aliivibrio fischeri (strain MJ11) (Vibrio fischeri) protein is Uracil phosphoribosyltransferase.